Reading from the N-terminus, the 73-residue chain is Large ribosomal subunit protein bL31 (73 aa).

Residues C16, C18, C37, and C40 each coordinate Zn(2+).

This sequence belongs to the bacterial ribosomal protein bL31 family. Type A subfamily. Part of the 50S ribosomal subunit. The cofactor is Zn(2+).

Its function is as follows. Binds the 23S rRNA. This is Large ribosomal subunit protein bL31 from Marinobacter nauticus (strain ATCC 700491 / DSM 11845 / VT8) (Marinobacter aquaeolei).